We begin with the raw amino-acid sequence, 144 residues long: Large ribosomal subunit protein uL13 (144 aa).

The protein belongs to the universal ribosomal protein uL13 family. As to quaternary structure, part of the 50S ribosomal subunit.

In terms of biological role, this protein is one of the early assembly proteins of the 50S ribosomal subunit, although it is not seen to bind rRNA by itself. It is important during the early stages of 50S assembly. The protein is Large ribosomal subunit protein uL13 of Heliobacterium modesticaldum (strain ATCC 51547 / Ice1).